Reading from the N-terminus, the 621-residue chain is DNA-directed RNA polymerase subunit gamma (621 aa).

Mg(2+) is bound by residues Asp-463, Asp-465, and Asp-467.

It belongs to the RNA polymerase beta' chain family. RpoC1 subfamily. In cyanobacteria the RNAP catalytic core is composed of 2 alpha, 1 beta, 1 beta', 1 gamma and 1 omega subunit. When a sigma factor is associated with the core the holoenzyme is formed, which can initiate transcription. Requires Mg(2+) as cofactor.

It catalyses the reaction RNA(n) + a ribonucleoside 5'-triphosphate = RNA(n+1) + diphosphate. Functionally, DNA-dependent RNA polymerase catalyzes the transcription of DNA into RNA using the four ribonucleoside triphosphates as substrates. The polypeptide is DNA-directed RNA polymerase subunit gamma (Nostoc commune).